Reading from the N-terminus, the 507-residue chain is Transcription factor CP2 (507 aa).

The Grh/CP2 DB domain occupies E61–S300. The interval E133 to V395 is DNA-binding. Disordered regions lie at residues P240–S268 and S296–P316. Basic and acidic residues predominate over residues K241–Y265.

The protein belongs to the grh/CP2 family. CP2 subfamily. Component of the SSP (stage selector protein) complex, which appears to be a heteromer of TFCP2 and 2 copies of NFE4.

Its subcellular location is the nucleus. May function as a transcription factor. The protein is Transcription factor CP2 (tfcp2) of Xenopus tropicalis (Western clawed frog).